The primary structure comprises 391 residues: Cell cycle checkpoint control protein RAD9A (391 aa).

At Tyr-28 the chain carries Phosphotyrosine. Residues 51–91 (FLFAPLFFQQYQAATPGQDLLRCKILMKSFLSVFRSLAMLE) form a possesses 3'-5' exonuclease activity region. The sufficient for interaction with ABL1 stretch occupies residues 266–391 (SDTDSHSQDL…VLAEDSEGEG (126 aa)). The span at 268 to 282 (TDSHSQDLGSPERHQ) shows a compositional bias: basic and acidic residues. Disordered stretches follow at residues 268–301 (TDSH…FAND) and 319–391 (SRVL…EGEG). Ser-272, Ser-277, and Ser-328 each carry phosphoserine. Ser-341 is subject to Phosphoserine; by CK2. Phosphoserine occurs at positions 375 and 380. Ser-387 carries the post-translational modification Phosphoserine; by CK2.

It belongs to the rad9 family. Component of the toroidal 9-1-1 (RAD9-RAD1-HUS1) complex, composed of RAD9A, RAD1 and HUS1. The 9-1-1 complex associates with LIG1, POLB, FEN1, RAD17, HDAC1, RPA1 and RPA2. The 9-1-1 complex associates with the RAD17-RFC complex. RAD9A interacts with BCL2L1, FEN1, RAD9B, ABL1, RPA1, ATAD5 and RPA2. Interacts with DNAJC7. Interacts (when phosphorylated) with TOPBP1. Post-translationally, constitutively phosphorylated on serine and threonine amino acids in absence of DNA damage. Hyperphosphorylated by PRKCD and ABL1 upon DNA damage. Its phosphorylation by PRKCD may be required for the formation of the 9-1-1 complex. Phosphorylated at Ser-341 and Ser-387 by CK2, promoting interaction with TOPBP1.

The protein resides in the nucleus. It catalyses the reaction Exonucleolytic cleavage in the 3'- to 5'-direction to yield nucleoside 5'-phosphates.. Functionally, component of the 9-1-1 cell-cycle checkpoint response complex that plays a major role in DNA repair. The 9-1-1 complex is recruited to DNA lesion upon damage by the RAD17-replication factor C (RFC) clamp loader complex. Acts then as a sliding clamp platform on DNA for several proteins involved in long-patch base excision repair (LP-BER). The 9-1-1 complex stimulates DNA polymerase beta (POLB) activity by increasing its affinity for the 3'-OH end of the primer-template and stabilizes POLB to those sites where LP-BER proceeds; endonuclease FEN1 cleavage activity on substrates with double, nick, or gap flaps of distinct sequences and lengths; and DNA ligase I (LIG1) on long-patch base excision repair substrates. The 9-1-1 complex is necessary for the recruitment of RHNO1 to sites of double-stranded breaks (DSB) occurring during the S phase. RAD9A possesses 3'-&gt;5' double stranded DNA exonuclease activity. This chain is Cell cycle checkpoint control protein RAD9A (RAD9A), found in Homo sapiens (Human).